Reading from the N-terminus, the 162-residue chain is Blue copper protein 1b (162 aa).

An N-terminal signal peptide occupies residues 1 to 23 (MASSRVVLILSISMVLLSSVAIA). The 101-residue stretch at 25 to 125 (TDYIVGDDKG…QMKLVITVLA (101 aa)) folds into the Phytocyanin domain. Histidine 65 provides a ligand contact to Cu cation. Residue asparagine 71 is glycosylated (N-linked (GlcNAc...) asparagine). Cysteines 78 and 112 form a disulfide. Residues cysteine 106, histidine 111, and methionine 117 each coordinate Cu cation. Residues 142–162 (VVSSLFGVVMAIMVAIAVIFA) form a helical membrane-spanning segment.

The protein localises to the membrane. This Medicago truncatula (Barrel medic) protein is Blue copper protein 1b.